The chain runs to 505 residues: Apolipoprotein N-acyltransferase (505 aa).

6 helical membrane-spanning segments follow: residues 15 to 46, 55 to 75, 89 to 109, 129 to 149, 161 to 181, and 192 to 212; these read AAFV…LLLL, ALIA…WVHV, LFLM…FGWL, LWLI…WLWL, FAPI…AGSL, and MACI…MQWV. The CN hydrolase domain maps to 225–471; that stretch reads IQGNIEQGLK…TGVLKATVTP (247 aa). E264 functions as the Proton acceptor in the catalytic mechanism. K330 is an active-site residue. C382 acts as the Nucleophile in catalysis. A helical transmembrane segment spans residues 479–499; that stretch reads FLWGTTPLYLWVGLAAGFAFW.

The protein belongs to the CN hydrolase family. Apolipoprotein N-acyltransferase subfamily.

The protein localises to the cell inner membrane. The catalysed reaction is N-terminal S-1,2-diacyl-sn-glyceryl-L-cysteinyl-[lipoprotein] + a glycerophospholipid = N-acyl-S-1,2-diacyl-sn-glyceryl-L-cysteinyl-[lipoprotein] + a 2-acyl-sn-glycero-3-phospholipid + H(+). Its pathway is protein modification; lipoprotein biosynthesis (N-acyl transfer). In terms of biological role, catalyzes the phospholipid dependent N-acylation of the N-terminal cysteine of apolipoprotein, the last step in lipoprotein maturation. The polypeptide is Apolipoprotein N-acyltransferase (Vibrio cholerae serotype O1 (strain ATCC 39315 / El Tor Inaba N16961)).